Consider the following 276-residue polypeptide: MSIKKFKPTSPGKRYMTVASKEEITREEPEKSLLAPLKNKSGRNNQGRISTRRQGGRHKRKYRIIDWKRDKDGVPAKVASIEYDPNRTAYIALLNYVDGEKRYILAPLGIKPGDKIESGSKAEIRPGNALPIRNIPVGTIVHNVELKPEKGGQLARSAGTYCQIVAKEGKYAHVKLPSEEVRMIHLDCRATVGQVGNVEHENIDLGKAGRARWQGKRPSVRGVAMNAVDHPHGGGEGKAFVGRKTQYTPWGQKSAGYKTRRKAKKSDKYIVKKRNQ.

Disordered stretches follow at residues 1 to 60 (MSIK…RHKR) and 226 to 276 (NAVD…KRNQ). Residues 20 to 31 (SKEEITREEPEK) are compositionally biased toward basic and acidic residues. Composition is skewed to basic residues over residues 50 to 60 (STRRQGGRHKR) and 258 to 276 (KTRR…KRNQ).

It belongs to the universal ribosomal protein uL2 family. In terms of assembly, part of the 50S ribosomal subunit. Forms a bridge to the 30S subunit in the 70S ribosome.

Its function is as follows. One of the primary rRNA binding proteins. Required for association of the 30S and 50S subunits to form the 70S ribosome, for tRNA binding and peptide bond formation. It has been suggested to have peptidyltransferase activity; this is somewhat controversial. Makes several contacts with the 16S rRNA in the 70S ribosome. The protein is Large ribosomal subunit protein uL2 of Natranaerobius thermophilus (strain ATCC BAA-1301 / DSM 18059 / JW/NM-WN-LF).